The chain runs to 751 residues: Phosphoribosylformylglycinamidine synthase subunit PurL (751 aa).

Residue histidine 54 is part of the active site. Residues tyrosine 57 and lysine 106 each contribute to the ATP site. Glutamate 108 lines the Mg(2+) pocket. Substrate-binding positions include 109-112 (SHNH) and arginine 131. Histidine 110 functions as the Proton acceptor in the catalytic mechanism. Aspartate 132 is a Mg(2+) binding site. A substrate-binding site is contributed by glutamine 256. Position 284 (aspartate 284) interacts with Mg(2+). 328-330 (ESQ) lines the substrate pocket. ATP-binding residues include aspartate 516 and glycine 553. Asparagine 554 is a binding site for Mg(2+). Serine 556 lines the substrate pocket.

It belongs to the FGAMS family. In terms of assembly, monomer. Part of the FGAM synthase complex composed of 1 PurL, 1 PurQ and 2 PurS subunits.

It localises to the cytoplasm. It carries out the reaction N(2)-formyl-N(1)-(5-phospho-beta-D-ribosyl)glycinamide + L-glutamine + ATP + H2O = 2-formamido-N(1)-(5-O-phospho-beta-D-ribosyl)acetamidine + L-glutamate + ADP + phosphate + H(+). The protein operates within purine metabolism; IMP biosynthesis via de novo pathway; 5-amino-1-(5-phospho-D-ribosyl)imidazole from N(2)-formyl-N(1)-(5-phospho-D-ribosyl)glycinamide: step 1/2. Its function is as follows. Part of the phosphoribosylformylglycinamidine synthase complex involved in the purines biosynthetic pathway. Catalyzes the ATP-dependent conversion of formylglycinamide ribonucleotide (FGAR) and glutamine to yield formylglycinamidine ribonucleotide (FGAM) and glutamate. The FGAM synthase complex is composed of three subunits. PurQ produces an ammonia molecule by converting glutamine to glutamate. PurL transfers the ammonia molecule to FGAR to form FGAM in an ATP-dependent manner. PurS interacts with PurQ and PurL and is thought to assist in the transfer of the ammonia molecule from PurQ to PurL. The chain is Phosphoribosylformylglycinamidine synthase subunit PurL from Nocardioides sp. (strain ATCC BAA-499 / JS614).